Consider the following 489-residue polypeptide: Protein translocase subunit SecY (489 aa).

Topologically, residues 1 to 20 (MGWKDAAEPVLSRMPAVARP) are cytoplasmic. The helical transmembrane segment at 21–47 (EGHVPFRRKLGWTGGILVLYFFLTNVT) threads the bilayer. Over 48-59 (LFGLDAATANDL) the chain is Extracellular. Positions 60 to 67 (FGQFRSIL) form an intramembrane region, helical. A discontinuously helical transmembrane segment spans residues 60–88 (FGQFRSILAGQQGSVLQLGIGPIVTASIV). Residues 68-79 (AGQQGSVLQLGI) lie within the membrane without spanning it. Positions 80 to 88 (GPIVTASIV) form an intramembrane region, helical. Residues 89-110 (LQLLGGADLLGLDTDNNPRDQV) are Cytoplasmic-facing. Residues 111–135 (LYQGLQKLLVGVMICLTGLPMVFAG) traverse the membrane as a helical segment. Topologically, residues 136–153 (NFLPADQAVATSLGIGTV) are extracellular. Residues 154 to 178 (GVKGLIFAQIAVGGVLILFMDEIVS) traverse the membrane as a helical segment. Residues 179-184 (KWGVGS) are Cytoplasmic-facing. The chain crosses the membrane as a helical span at residues 185-203 (GVGLFIIAGVSQQLVGGLF). Over 204–244 (SWQGLGGTSGFFATWIGIITGAIELPASPTDLLSTVFLGQG) the chain is Extracellular. The chain crosses the membrane as a helical span at residues 245–266 (QLLALITTLLIFGIVVYAESVR). The Cytoplasmic portion of the chain corresponds to 267 to 291 (VEIPLSHARVKGARGRFPVKLIYAS). The helical transmembrane segment at 292–313 (VLPMILVRALQANIQFLGRFLN) threads the bilayer. Over 314–364 (SSWVGMPAWLGQYTSGQVTGGLLYYLAPIQSRSDWMWFLGLTSADPLDIAI) the chain is Extracellular. Residues 365-384 (RVLIDLIFMIVGGAVFAIFW) form a helical membrane-spanning segment. Residues 385-427 (VETTGMGPKSTAQQIQNSGMQIPGFRRNPQVIERVMERYIPQV) lie on the Cytoplasmic side of the membrane. Residues 428-446 (TVIGGALVGLLAVMANMLG) form a helical membrane-spanning segment. Residues 447–450 (TIGA) lie on the Extracellular side of the membrane. The helical transmembrane segment at 451-465 (VSGTGLLLTVSITYK) threads the bilayer. Topologically, residues 466–488 (LYEEIAEEQLMEMHPMMRNMFGS) are cytoplasmic.

This sequence belongs to the SecY/SEC61-alpha family. As to quaternary structure, component of the Sec protein translocase complex. Heterotrimer consisting of alpha (SecY), beta (SecG) and gamma (SecE) subunits. The heterotrimers can form oligomers, although 1 heterotrimer is thought to be able to translocate proteins. Interacts with the ribosome. May interact with SecDF, and other proteins may be involved.

The protein resides in the cell membrane. Functionally, the central subunit of the protein translocation channel SecYEG. Consists of two halves formed by TMs 1-5 and 6-10. These two domains form a lateral gate at the front which open onto the bilayer between TMs 2 and 7, and are clamped together by SecE at the back. The channel is closed by both a pore ring composed of hydrophobic SecY resides and a short helix (helix 2A) on the extracellular side of the membrane which forms a plug. The plug probably moves laterally to allow the channel to open. The ring and the pore may move independently. The sequence is that of Protein translocase subunit SecY from Haloferax volcanii (strain ATCC 29605 / DSM 3757 / JCM 8879 / NBRC 14742 / NCIMB 2012 / VKM B-1768 / DS2) (Halobacterium volcanii).